The primary structure comprises 593 residues: UvrABC system protein C (593 aa).

The GIY-YIG domain occupies 14–91 (DSPGCYLHKD…IQENMPKYNI (78 aa)). The 36-residue stretch at 196–231 (NKIVNGLTEKMKSAAMTMEFERAAEYRDLIEAISLL) folds into the UVR domain.

The protein belongs to the UvrC family. In terms of assembly, interacts with UvrB in an incision complex.

Its subcellular location is the cytoplasm. Its function is as follows. The UvrABC repair system catalyzes the recognition and processing of DNA lesions. UvrC both incises the 5' and 3' sides of the lesion. The N-terminal half is responsible for the 3' incision and the C-terminal half is responsible for the 5' incision. The chain is UvrABC system protein C from Streptococcus agalactiae serotype Ia (strain ATCC 27591 / A909 / CDC SS700).